Here is an 805-residue protein sequence, read N- to C-terminus: Arginine/serine-rich protein PNISR (805 aa).

The span at 75 to 88 shows a compositional bias: polar residues; sequence NNHGNFQGDSNFNR. 2 disordered regions span residues 75 to 331 and 382 to 805; these read NNHG…EEKE and LTGL…SRSR. 2 stretches are compositionally biased toward pro residues: residues 100–115 and 183–194; these read PPHPPPEQPWMPPAPG and YWQPGPPGPPAP. Positions 197-210 are enriched in basic and acidic residues; that stretch reads NRRERPPSFRDRQR. Serine 204 and serine 211 each carry phosphoserine. A Glycyl lysine isopeptide (Lys-Gly) (interchain with G-Cter in SUMO2) cross-link involves residue lysine 218. Positions 237 to 276 form a coiled coil; it reads REGLEKMEREKQKKLEKERMEQQRSQLSKKEKKATEDAEG. Over residues 238–258 the composition is skewed to basic and acidic residues; sequence EGLEKMEREKQKKLEKERMEQ. Phosphoserine occurs at positions 290, 304, 313, and 321. Positions 290 to 299 are enriched in acidic residues; the sequence is SDEEDEDAEN. Residues 384–393 show a composition bias toward gly residues; that stretch reads GLGGLGGYGS. Residues 421 to 463 show a composition bias toward basic and acidic residues; the sequence is QKQEAFWRKEKEQQLLQDKQIEEEKQQTERVTKEMNEFIHREQ. A coiled-coil region spans residues 427-461; the sequence is WRKEKEQQLLQDKQIEEEKQQTERVTKEMNEFIHR. Residues serine 465 and serine 467 each carry the phosphoserine modification. 2 stretches are compositionally biased toward basic and acidic residues: residues 473-486 and 494-508; these read EADRDAVNDKKRTP and EPKREHKGKEKERGS. A Phosphothreonine modification is found at threonine 485. Lysine 496 participates in a covalent cross-link: Glycyl lysine isopeptide (Lys-Gly) (interchain with G-Cter in SUMO2). The span at 509–550 shows a compositional bias: low complexity; that stretch reads RSGSSSSGSSSSGSRTSSSSSSVSSSSYSSSSGSSCTSSRSS. Composition is skewed to basic residues over residues 551-560, 567-579, 587-598, and 607-639; these read SPKRRKRPSR, KARRSRSRSYSRR, TRGKLRDRRRSN, and RRNRSPSRDRRRSRSRSRDRRTNRSSRSRSRDR. Residues 659 to 721 show a composition bias toward basic and acidic residues; that stretch reads EAKEQDRKKE…KRKRESERTF (63 aa). Lysine 703 participates in a covalent cross-link: Glycyl lysine isopeptide (Lys-Gly) (interchain with G-Cter in SUMO2). The residue at position 726 (serine 726) is a Phosphoserine. Positions 732–753 are enriched in basic and acidic residues; sequence IRHDSRQDSKKNATKDSKRHSG. Over residues 754 to 767 the composition is skewed to low complexity; it reads SDSSGRSSSESPGS. Composition is skewed to basic residues over residues 771–781 and 789–805; these read KKAKKPKHSRS and RSGKKASRKHKSKSRSR.

It belongs to the splicing factor SR family. As to quaternary structure, interacts with PNN.

It localises to the nucleus speckle. The sequence is that of Arginine/serine-rich protein PNISR (Pnisr) from Mus musculus (Mouse).